Reading from the N-terminus, the 286-residue chain is Light-independent protochlorophyllide reductase iron-sulfur ATP-binding protein (286 aa).

Residues 10-15 (GIGKST) and K39 each bind ATP. S14 serves as a coordination point for Mg(2+). 2 residues coordinate [4Fe-4S] cluster: C95 and C129. 180-181 (NR) contributes to the ATP binding site.

Belongs to the NifH/BchL/ChlL family. In terms of assembly, homodimer. Protochlorophyllide reductase is composed of three subunits; ChlL, ChlN and ChlB. The cofactor is [4Fe-4S] cluster.

It carries out the reaction chlorophyllide a + oxidized 2[4Fe-4S]-[ferredoxin] + 2 ADP + 2 phosphate = protochlorophyllide a + reduced 2[4Fe-4S]-[ferredoxin] + 2 ATP + 2 H2O. It functions in the pathway porphyrin-containing compound metabolism; chlorophyll biosynthesis (light-independent). Functionally, component of the dark-operative protochlorophyllide reductase (DPOR) that uses Mg-ATP and reduced ferredoxin to reduce ring D of protochlorophyllide (Pchlide) to form chlorophyllide a (Chlide). This reaction is light-independent. The L component serves as a unique electron donor to the NB-component of the complex, and binds Mg-ATP. The polypeptide is Light-independent protochlorophyllide reductase iron-sulfur ATP-binding protein (Synechococcus elongatus (strain ATCC 33912 / PCC 7942 / FACHB-805) (Anacystis nidulans R2)).